The primary structure comprises 246 residues: Probable transcriptional regulatory protein CKO_01097 (246 aa).

The interval 1–20 (MAGHSKWANTRHRKAAQDAK) is disordered.

This sequence belongs to the TACO1 family.

It localises to the cytoplasm. This chain is Probable transcriptional regulatory protein CKO_01097, found in Citrobacter koseri (strain ATCC BAA-895 / CDC 4225-83 / SGSC4696).